A 142-amino-acid polypeptide reads, in one-letter code: Large ribosomal subunit protein uL13 (142 aa).

This sequence belongs to the universal ribosomal protein uL13 family. Part of the 50S ribosomal subunit.

Its function is as follows. This protein is one of the early assembly proteins of the 50S ribosomal subunit, although it is not seen to bind rRNA by itself. It is important during the early stages of 50S assembly. The chain is Large ribosomal subunit protein uL13 from Vibrio parahaemolyticus serotype O3:K6 (strain RIMD 2210633).